The sequence spans 119 residues: Succinate dehydrogenase assembly factor 2, mitochondrial (119 aa).

Belongs to the SDHAF2 family. As to quaternary structure, interacts with the flavoprotein subunit within the SDH catalytic dimer.

Its subcellular location is the mitochondrion matrix. Plays an essential role in the assembly of succinate dehydrogenase (SDH), an enzyme complex (also referred to as respiratory complex II) that is a component of both the tricarboxylic acid (TCA) cycle and the mitochondrial electron transport chain, and which couples the oxidation of succinate to fumarate with the reduction of ubiquinone (coenzyme Q) to ubiquinol. Required for flavinylation (covalent attachment of FAD) of the flavoprotein subunit of the SDH catalytic dimer. This chain is Succinate dehydrogenase assembly factor 2, mitochondrial, found in Caenorhabditis elegans.